The chain runs to 138 residues: Large ribosomal subunit protein uL16 (138 aa).

It belongs to the universal ribosomal protein uL16 family. As to quaternary structure, part of the 50S ribosomal subunit.

Binds 23S rRNA and is also seen to make contacts with the A and possibly P site tRNAs. This is Large ribosomal subunit protein uL16 from Gluconacetobacter diazotrophicus (strain ATCC 49037 / DSM 5601 / CCUG 37298 / CIP 103539 / LMG 7603 / PAl5).